The sequence spans 157 residues: Cytochrome b6-f complex subunit 4 (157 aa).

The next 3 membrane-spanning stretches (helical) occupy residues 35 to 55 (ILYIFPVVILGTISFSLGLGV), 94 to 114 (LVGVLSLASVPVILVLTAFIE), and 130 to 150 (LVYLTSTCYALWLGYGSVLGI).

Belongs to the cytochrome b family. PetD subfamily. The 4 large subunits of the cytochrome b6-f complex are cytochrome b6, subunit IV (17 kDa polypeptide, petD), cytochrome f and the Rieske protein, while the 4 small subunits are petG, petL, petM and petN. The complex functions as a dimer.

The protein resides in the plastid. The protein localises to the chloroplast thylakoid membrane. Component of the cytochrome b6-f complex, which mediates electron transfer between photosystem II (PSII) and photosystem I (PSI), cyclic electron flow around PSI, and state transitions. The protein is Cytochrome b6-f complex subunit 4 of Amphidinium carterae (Dinoflagellate).